The chain runs to 154 residues: MVEKKTSVRSQDPGQRRVLDRAARQRRINRQLEALENDNFQDDPHAGLPQLGKRLPQFDDDADTGKKKKKTRGDHFKLRFRKNFQALLEEQNLSVAEGPNYLTACAGPPSRPQRPFCAVCGFPSPYTCVSCGARYCTVRCLGTHQETRCLKWTV.

Positions 1–72 (MVEKKTSVRS…DTGKKKKKTR (72 aa)) are disordered. Over residues 14–23 (GQRRVLDRAA) the composition is skewed to basic and acidic residues. Residues 23–39 (ARQRRINRQLEALENDN) adopt a coiled-coil conformation. Positions 38–47 (DNFQDDPHAG) match the Nuclear localization signal motif. Positions 72 to 110 (RGDHFKLRFRKNFQALLEEQNLSVAEGPNYLTACAGPPS) are interaction with NR1D2. Thr103 carries the post-translational modification Phosphothreonine; by MAPK11 and MAPK14. Residues Cys117, Cys120, Cys128, Cys131, Cys136, Cys140, His144, and Cys149 each contribute to the Zn(2+) site. Residues 117-149 (CAVCGFPSPYTCVSCGARYCTVRCLGTHQETRC) form an HIT-type zinc finger.

The protein belongs to the ZNHIT1 family. In terms of assembly, component of the chromatin-remodeling SRCAP complex composed of at least SRCAP, DMAP1, RUVBL1, RUVBL2, ACTL6A, YEATS4, ACTR6 and ZNHIT1. Interacts with MAPK11 and MAPK14. Interacts with NR1D1 and NR2D2. Interacts (via HIT-type zinc finger) with the RUVBL1/RUVBL2 complex in the presence of ADP. Interacts with histone deacetylase HDAC1. Interacts with histone H2AZ1; the interaction results in recruitment of H2AZ1 to the MYOG promoter region. Interacts with PCID2; the interaction results in inhibition of SRCAP complex activity, preventing the deposition of histone variant H2Az1 to lymphoid fate regulator genes and restricting lymphoid lineage commitment. Phosphorylated on Thr by MAPK11 or MAPK14. Phosphorylation is required for MYOG induction, for deposition of histone H2AZ1 at the MYOG promoter and for SRCAP complex integrity.

The protein localises to the nucleus. Plays a role in chromatin remodeling by promoting the incorporation of histone variant H2AZ1/H2A.Z into the genome to regulate gene expression. Promotes SRCAP complex-mediated deposition of histone variant H2AZ1 to lymphoid fate regulator genes, enhancing lymphoid lineage commitment. Recruited to the promoter of the transcriptional activator MYOG at the early stages of muscle differentiation where it mediates binding of histone H2AZ1 to chromatin and induces muscle-specific gene expression. Maintains hematopoietic stem cell (HSC) quiescence by determining the chromatin accessibility at distal enhancers of HSC quiescence genes such as PTEN, FSTL1 and KLF4, enhancing deposition of H2AZ1 to promote their sustained transcription and restricting PI3K-AKT signaling inhibition. Plays a role in intestinal stem cell maintenance by promoting H2AZ1 deposition at the transcription start sites of genes involved in intestinal stem cell fate determination including LGR5, TGFB1 and TGFBR2, thereby contributing to gene transcription. Promotes phosphorylation of the H2AZ1 chaperone VPS72/YL1 which enhances the interaction between HZAZ1 and VPS72. Regulates the entry of male germ cells into meiosis by controlling histone H2AZ1 deposition which facilitates the expression of meiotic genes such as MEIOSIN, leading to the initiation of meiosis. Required for postnatal heart function through its role in maintenance of cardiac Ca(2+) homeostasis by modulating the expression of Ca(2+)-regulating proteins CASQ1 and ATP2A2/SERCA2A via deposition of histone H2AZ1 at their promoters. During embryonic heart development, required for mitochondrial maturation and oxidative metabolism by functioning through H2AZ1 deposition to activate transcription of metabolic genes and is also required to maintain the stability of the respiratory complex. In neural cells, increases deposition of the H2AZ1 histone variant and promotes neurite growth. Plays a role in TP53/p53-mediated apoptosis induction by stimulating the transcriptional activation of several proapoptotic p53 target genes such as PMAIP1/NOXA and BBC3/PUMA. Mediates cell cycle arrest induced in response to gamma-irradiation by enhancing recruitment of TP53/p53 to the promoter of the cell cycle inhibitor CDKN1A, leading to its transcriptional activation. Recruited to the promoter of cyclin-dependent kinase CDK6 and inhibits its transcription, possibly by decreasing the acetylation level of histone H4, leading to cell cycle arrest at the G1 phase. Plays a role in lens fiber cell differentiation by regulating the expression of cell cycle regulator CDKN1A/p21Cip1. Binds to transcriptional repressor NR1D2 and relieves it of its inhibitory effect on the transcription of apolipoprotein APOC3 without affecting its DNA-binding activity. The polypeptide is Zinc finger HIT domain-containing protein 1 (ZNHIT1) (Bos taurus (Bovine)).